The sequence spans 211 residues: Superoxide dismutase [Fe] (211 aa).

Fe cation is bound by residues histidine 34, histidine 85, aspartate 171, and histidine 175.

The protein belongs to the iron/manganese superoxide dismutase family. Homotetramer. It depends on Fe cation as a cofactor.

The protein resides in the cytoplasm. It catalyses the reaction 2 superoxide + 2 H(+) = H2O2 + O2. Functionally, destroys superoxide anion radicals which are normally produced within the cells and which are toxic to biological systems. The sequence is that of Superoxide dismutase [Fe] (sod) from Saccharolobus solfataricus (strain ATCC 35092 / DSM 1617 / JCM 11322 / P2) (Sulfolobus solfataricus).